The chain runs to 384 residues: Putative F-box/kelch-repeat protein At3g27910 (384 aa).

The 53-residue stretch at 27–79 (SPTSLPLPDEIIVNCFAYIPRCDYPSLSLVSKTFNRLITSIELNIVRSLFQRT) folds into the F-box domain. 4 Kelch repeats span residues 138–184 (KIYV…IVDG), 185–235 (KIYV…VMNK), 237–274 (IYIM…VIDN), and 275–323 (MLYT…MANH).

This Arabidopsis thaliana (Mouse-ear cress) protein is Putative F-box/kelch-repeat protein At3g27910.